The following is a 359-amino-acid chain: Nicotinate-nucleotide--dimethylbenzimidazole phosphoribosyltransferase (359 aa).

Glu318 functions as the Proton acceptor in the catalytic mechanism.

It belongs to the CobT family. Homodimer.

The catalysed reaction is 5,6-dimethylbenzimidazole + nicotinate beta-D-ribonucleotide = alpha-ribazole 5'-phosphate + nicotinate + H(+). It functions in the pathway nucleoside biosynthesis; alpha-ribazole biosynthesis; alpha-ribazole from 5,6-dimethylbenzimidazole: step 1/2. In terms of biological role, catalyzes the synthesis of alpha-ribazole-5'-phosphate from nicotinate mononucleotide (NAMN) and 5,6-dimethylbenzimidazole (DMB). The chain is Nicotinate-nucleotide--dimethylbenzimidazole phosphoribosyltransferase from Escherichia coli O81 (strain ED1a).